Consider the following 362-residue polypeptide: 3-dehydroquinate synthase (362 aa).

NAD(+)-binding positions include D72 to K77, G106 to D110, T130 to T131, K143, and K152. E185, H248, and H265 together coordinate Zn(2+).

It belongs to the sugar phosphate cyclases superfamily. Dehydroquinate synthase family. The cofactor is Co(2+). Requires Zn(2+) as cofactor. It depends on NAD(+) as a cofactor.

Its subcellular location is the cytoplasm. The catalysed reaction is 7-phospho-2-dehydro-3-deoxy-D-arabino-heptonate = 3-dehydroquinate + phosphate. Its pathway is metabolic intermediate biosynthesis; chorismate biosynthesis; chorismate from D-erythrose 4-phosphate and phosphoenolpyruvate: step 2/7. Functionally, catalyzes the conversion of 3-deoxy-D-arabino-heptulosonate 7-phosphate (DAHP) to dehydroquinate (DHQ). In Laribacter hongkongensis (strain HLHK9), this protein is 3-dehydroquinate synthase.